The sequence spans 150 residues: Urease accessory protein UreE (150 aa).

This sequence belongs to the UreE family.

Its subcellular location is the cytoplasm. Functionally, involved in urease metallocenter assembly. Binds nickel. Probably functions as a nickel donor during metallocenter assembly. The sequence is that of Urease accessory protein UreE from Staphylococcus aureus (strain Mu3 / ATCC 700698).